The sequence spans 216 residues: Acyl-homoserine-lactone synthase (216 aa).

Belongs to the autoinducer synthase family.

The catalysed reaction is a fatty acyl-[ACP] + S-adenosyl-L-methionine = an N-acyl-L-homoserine lactone + S-methyl-5'-thioadenosine + holo-[ACP] + H(+). In terms of biological role, required for the synthesis of OHHL (N-(3-oxohexanoyl)-L-homoserine lactone), an autoinducer molecule which binds to CarR and thus acts in the control of the biosynthesis of carbapenem antibiotics. The polypeptide is Acyl-homoserine-lactone synthase (carI) (Pectobacterium carotovorum subsp. carotovorum (Erwinia carotovora subsp. carotovora)).